We begin with the raw amino-acid sequence, 354 residues long: Phosphoribosylformylglycinamidine cyclo-ligase (354 aa).

The protein belongs to the AIR synthase family.

The protein resides in the cytoplasm. It catalyses the reaction 2-formamido-N(1)-(5-O-phospho-beta-D-ribosyl)acetamidine + ATP = 5-amino-1-(5-phospho-beta-D-ribosyl)imidazole + ADP + phosphate + H(+). It functions in the pathway purine metabolism; IMP biosynthesis via de novo pathway; 5-amino-1-(5-phospho-D-ribosyl)imidazole from N(2)-formyl-N(1)-(5-phospho-D-ribosyl)glycinamide: step 2/2. The chain is Phosphoribosylformylglycinamidine cyclo-ligase from Synechococcus sp. (strain JA-2-3B'a(2-13)) (Cyanobacteria bacterium Yellowstone B-Prime).